Consider the following 306-residue polypeptide: Zinc finger protein 625 (306 aa).

Residues 31–53 (PRVKSCGEVSVGHASLNRHHRAD) form a C2H2-type 1; degenerate zinc finger. C2H2-type zinc fingers lie at residues 69-91 (YKCT…EWAH), 97-119 (YDCE…RIMH), 125-147 (YKCN…KRTH), 153-175 (YECK…ERTH), 181-203 (YECS…KITH), 209-231 (YECK…ERTH), 237-259 (YECK…GRTH), and 265-287 (YECK…ERTH). Position 209 is a phosphotyrosine (Y209). Residues 287 to 306 (HTGEKPCSSNTSKGQGEKIA) are disordered.

Belongs to the krueppel C2H2-type zinc-finger protein family.

It localises to the nucleus. Functionally, may be involved in transcriptional regulation. The protein is Zinc finger protein 625 (ZNF625) of Homo sapiens (Human).